We begin with the raw amino-acid sequence, 232 residues long: Ribonuclease 3 (232 aa).

The RNase III domain occupies 6–133 (FNDIENRLGV…VIAAVYLDKG (128 aa)). E46 provides a ligand contact to Mg(2+). Residue D50 is part of the active site. Residues D119 and E122 each coordinate Mg(2+). E122 is a catalytic residue. The region spanning 160 to 229 (DFKTKLQELL…AKEALKRLEK (70 aa)) is the DRBM domain.

The protein belongs to the ribonuclease III family. As to quaternary structure, homodimer. Mg(2+) serves as cofactor.

The protein localises to the cytoplasm. It carries out the reaction Endonucleolytic cleavage to 5'-phosphomonoester.. In terms of biological role, digests double-stranded RNA. Involved in the processing of primary rRNA transcript to yield the immediate precursors to the large and small rRNAs (23S and 16S). Processes some mRNAs, and tRNAs when they are encoded in the rRNA operon. Processes pre-crRNA and tracrRNA of type II CRISPR loci if present in the organism. This is Ribonuclease 3 from Clostridium botulinum (strain Eklund 17B / Type B).